Consider the following 389-residue polypeptide: Chalcone synthase H2 (389 aa).

Cysteine 164 is an active-site residue.

It belongs to the thiolase-like superfamily. Chalcone/stilbene synthases family.

It localises to the cytoplasm. The enzyme catalyses (E)-4-coumaroyl-CoA + 3 malonyl-CoA + 3 H(+) = 2',4,4',6'-tetrahydroxychalcone + 3 CO2 + 4 CoA. Its pathway is secondary metabolite biosynthesis; flavonoid biosynthesis. Its function is as follows. Involved in the biosynthesis of prenylated phenolics natural products which contribute to the bitter taste of beer and display broad biological activities. Chalcone synthase that can use 4-coumaroyl-CoA to produce 4,2',4',6'-tetrahydroxychalcone (also termed naringenin-chalcone or chalcone) which can, under specific conditions, spontaneously isomerize into naringenin. The chain is Chalcone synthase H2 from Humulus lupulus (European hop).